Consider the following 83-residue polypeptide: MVTIRLARGGAKKRPFYNIVVADSRNARDGRFIERVGFFNPLARGQEETLRLDLARVEHWVSNGAATTERVAKLIKDARKATA.

This sequence belongs to the bacterial ribosomal protein bS16 family.

The protein is Small ribosomal subunit protein bS16 of Shewanella putrefaciens (strain CN-32 / ATCC BAA-453).